The following is a 147-amino-acid chain: MRDNTIGSLIWLRLIRFTNQSNQMSNEFLKRFDLTTAQFDVLLQIRTYQPLTQMELAEKVTVTQGGISRMLTRLEKEGYIVRKQDWKTKTISLTEQGEAALERALPEQLAFQSSFFDDVLNEEEQKILYELMTKVHKHSEKKELPQE.

Residues 1–137 (MRDNTIGSLI…LYELMTKVHK (137 aa)) enclose the HTH marR-type domain. The H-T-H motif DNA-binding region spans 53 to 76 (QMELAEKVTVTQGGISRMLTRLEK).

This is an uncharacterized protein from Bacillus thuringiensis subsp. konkukian (strain 97-27).